We begin with the raw amino-acid sequence, 1249 residues long: Pleckstrin homology-like domain family B member 2 (1249 aa).

2 disordered regions span residues 64 to 85 and 128 to 154; these read QPVS…SPSL and DHYT…SSRN. Residues S71 and S73 each carry the phosphoserine modification. Residues 74–84 show a composition bias toward polar residues; it reads PMGTSVRSSPS. Positions 128–143 are enriched in basic and acidic residues; the sequence is DHYTGRDSERSTRLSE. 4 positions are modified to phosphoserine: S156, S203, S241, and S244. Disordered regions lie at residues 190 to 248 and 264 to 289; these read SPIS…LSNM and NQMS…GEKD. The span at 231-248 shows a compositional bias: polar residues; it reads ENVSVRTRKYSGSSLSNM. Over residues 267-283 the composition is skewed to low complexity; sequence SPLSLPPRSSLGNSRRG. Phosphoserine is present on residues S329, S333, S347, S380, S383, S389, S411, S416, S465, S486, and S510. Residues 388–424 form a disordered region; it reads DSDLESLRQSSETPQPVLRERKSSISSISGRDDLMDY. Residues T546 and T570 each carry the phosphothreonine modification. Coiled coils occupy residues 580-692 and 718-803; these read TQEL…LDNC and FEDL…LCNL. Residues 866–934 are disordered; the sequence is VSQPQSSEHF…LGQSNSCGSV (69 aa). Basic and acidic residues predominate over residues 873–888; that stretch reads EHFRSLEERKKQHKEG. Phosphothreonine is present on T894. Positions 901–919 are enriched in polar residues; that stretch reads TPSLSPHFSSATMGRSTTP. Positions 1028–1094 form a coiled coil; it reads IARIEEMERL…QKLIEKEVKI (67 aa). The 104-residue stretch at 1139 to 1242 folds into the PH domain; sequence EKTCRGYLIK…WMDVIVTGAE (104 aa).

Interacts with FLNC. Interacts with AMOTL2; interaction may facilitate PHLDB2 localization to the myotube podosome cortex that surrounds the core. Part of a cortical microtubule stabilization complex (CMSC) composed of KANK1, PPFIA1, PPFIBP1, ERC1/ELKS, PHLDB2/LL5beta, CLASPs, KIF21A and possibly additional interactors; within CMSCs KANK1 and PHLDB2/LL5beta appear to be the core components for targeting of microtubule-binding proteins KIF21A and CLASPs, whereas PPFIA1, PPFIBP1 and ERC1/ELKS serve as scaffolds for protein clustering. As to expression, expressed at postsynaptic membranes of skeletal neuromuscular junctions (at protein level).

Its subcellular location is the cytoplasm. It localises to the membrane. The protein resides in the cell projection. The protein localises to the podosome. It is found in the cell cortex. Seems to be involved in the assembly of the postsynaptic apparatus. May play a role in acetyl-choline receptor (AChR) aggregation in the postsynaptic membrane. The polypeptide is Pleckstrin homology-like domain family B member 2 (Phldb2) (Mus musculus (Mouse)).